Reading from the N-terminus, the 362-residue chain is MASSADREKSLETALAQIDRQFGKGSVMRLGSDERAPVAVIPTGSVALDVALGIGGLPRGRIVEIYGPESSGKTTLTLHAIANAQRAGGIAAFIDAEHALDPEYAKKLGVDIDALLVSQPDTGEQALEIADMLVRSGSIDLVVIDSVAALVPRAEIEGEMGDSHVGLQARLMSQALRKLTGGLNQTQTTMIFINQLREKIGVFFGSPETTAGGKALKFYASVRLDIRRIETLKDGTDAVGNRTRVKVVKNKMAPPFKQAEFDILYGTGISREGSLIDFGVEHEIVRKSGAWYTYDGDQLGQGKENSRKHLLNNPEIAAEIEQKIKVKLGLVKDPNAVADAPADSAPAPVAAVAPKASARKSA.

67–74 (GPESSGKT) contributes to the ATP binding site. The span at 337–356 (VADAPADSAPAPVAAVAPKA) shows a compositional bias: low complexity. The tract at residues 337–362 (VADAPADSAPAPVAAVAPKASARKSA) is disordered.

It belongs to the RecA family.

The protein resides in the cytoplasm. In terms of biological role, can catalyze the hydrolysis of ATP in the presence of single-stranded DNA, the ATP-dependent uptake of single-stranded DNA by duplex DNA, and the ATP-dependent hybridization of homologous single-stranded DNAs. It interacts with LexA causing its activation and leading to its autocatalytic cleavage. The protein is Protein RecA of Clavibacter michiganensis subsp. michiganensis (strain NCPPB 382).